The following is a 140-amino-acid chain: ATP synthase epsilon chain (140 aa).

It belongs to the ATPase epsilon chain family. In terms of assembly, F-type ATPases have 2 components, CF(1) - the catalytic core - and CF(0) - the membrane proton channel. CF(1) has five subunits: alpha(3), beta(3), gamma(1), delta(1), epsilon(1). CF(0) has three main subunits: a, b and c.

It is found in the cell inner membrane. Functionally, produces ATP from ADP in the presence of a proton gradient across the membrane. The polypeptide is ATP synthase epsilon chain (Bordetella bronchiseptica (strain ATCC BAA-588 / NCTC 13252 / RB50) (Alcaligenes bronchisepticus)).